Consider the following 345-residue polypeptide: Methionine import ATP-binding protein MetN 2 (345 aa).

The ABC transporter domain maps to 4-243 (IELRHVKKEF…PQTEIAKRFI (240 aa)). 40 to 47 (GYSGAGKS) is a binding site for ATP.

The protein belongs to the ABC transporter superfamily. Methionine importer (TC 3.A.1.24) family. As to quaternary structure, the complex is composed of two ATP-binding proteins (MetN), two transmembrane proteins (MetI) and a solute-binding protein (MetQ).

It localises to the cell membrane. The enzyme catalyses L-methionine(out) + ATP + H2O = L-methionine(in) + ADP + phosphate + H(+). The catalysed reaction is D-methionine(out) + ATP + H2O = D-methionine(in) + ADP + phosphate + H(+). Functionally, part of the ABC transporter complex MetNIQ involved in methionine import. Responsible for energy coupling to the transport system. This chain is Methionine import ATP-binding protein MetN 2, found in Enterococcus faecalis (strain ATCC 700802 / V583).